We begin with the raw amino-acid sequence, 93 residues long: Small ribosomal subunit protein uS19 (93 aa).

Belongs to the universal ribosomal protein uS19 family.

Functionally, protein S19 forms a complex with S13 that binds strongly to the 16S ribosomal RNA. The polypeptide is Small ribosomal subunit protein uS19 (Brevibacillus brevis (strain 47 / JCM 6285 / NBRC 100599)).